The primary structure comprises 139 residues: Holo-[acyl-carrier-protein] synthase (139 aa).

Mg(2+) is bound by residues Asp-8 and Glu-57.

This sequence belongs to the P-Pant transferase superfamily. AcpS family. Mg(2+) serves as cofactor.

Its subcellular location is the cytoplasm. It carries out the reaction apo-[ACP] + CoA = holo-[ACP] + adenosine 3',5'-bisphosphate + H(+). Transfers the 4'-phosphopantetheine moiety from coenzyme A to a Ser of acyl-carrier-protein. This chain is Holo-[acyl-carrier-protein] synthase, found in Rhizobium meliloti (strain 1021) (Ensifer meliloti).